Consider the following 312-residue polypeptide: Ribosomal protein uL3 glutamine methyltransferase (312 aa).

It belongs to the protein N5-glutamine methyltransferase family. PrmB subfamily.

The enzyme catalyses L-glutaminyl-[ribosomal protein uL3] + S-adenosyl-L-methionine = N(5)-methyl-L-glutaminyl-[ribosomal protein uL3] + S-adenosyl-L-homocysteine + H(+). Methylates large ribosomal subunit protein uL3 on a specific glutamine residue. The protein is Ribosomal protein uL3 glutamine methyltransferase of Xylella fastidiosa (strain Temecula1 / ATCC 700964).